Consider the following 251-residue polypeptide: Triosephosphate isomerase (251 aa).

N9–K11 lines the substrate pocket. Residue H95 is the Electrophile of the active site. The Proton acceptor role is filled by E167. Substrate contacts are provided by residues G173, S212, and G233–G234.

Belongs to the triosephosphate isomerase family. In terms of assembly, homodimer.

It is found in the cytoplasm. It carries out the reaction D-glyceraldehyde 3-phosphate = dihydroxyacetone phosphate. It functions in the pathway carbohydrate biosynthesis; gluconeogenesis. It participates in carbohydrate degradation; glycolysis; D-glyceraldehyde 3-phosphate from glycerone phosphate: step 1/1. Functionally, involved in the gluconeogenesis. Catalyzes stereospecifically the conversion of dihydroxyacetone phosphate (DHAP) to D-glyceraldehyde-3-phosphate (G3P). This is Triosephosphate isomerase from Pseudomonas putida (strain GB-1).